Reading from the N-terminus, the 286-residue chain is 4-diphosphocytidyl-2-C-methyl-D-erythritol kinase (286 aa).

The active site involves lysine 11. 94–104 (PMGGGIGGGSS) provides a ligand contact to ATP. Aspartate 136 is a catalytic residue.

It belongs to the GHMP kinase family. IspE subfamily.

It catalyses the reaction 4-CDP-2-C-methyl-D-erythritol + ATP = 4-CDP-2-C-methyl-D-erythritol 2-phosphate + ADP + H(+). It functions in the pathway isoprenoid biosynthesis; isopentenyl diphosphate biosynthesis via DXP pathway; isopentenyl diphosphate from 1-deoxy-D-xylulose 5-phosphate: step 3/6. In terms of biological role, catalyzes the phosphorylation of the position 2 hydroxy group of 4-diphosphocytidyl-2C-methyl-D-erythritol. In Pseudomonas putida (strain W619), this protein is 4-diphosphocytidyl-2-C-methyl-D-erythritol kinase.